Reading from the N-terminus, the 324-residue chain is IDS-like terpene synthase 1 (324 aa).

2 residues coordinate Mg(2+): Asp77 and Asp81.

This sequence belongs to the FPP/GGPP synthase family. Mg(2+) is required as a cofactor.

The catalysed reaction is (2E)-geranyl diphosphate = (E)-beta-ocimene + diphosphate. It carries out the reaction (2E)-geranyl diphosphate + H2O = linalool + diphosphate. The enzyme catalyses (2E,6E)-farnesyl diphosphate = (3E,6E)-alpha-farnesene + diphosphate. It catalyses the reaction (2E,6E,10E)-geranylgeranyl diphosphate = (E,E,E)-alpha-springene + diphosphate. Its function is as follows. Terpene synthase that shows monoterpene synthase activity and produces (E)-beta-ocimene as a major product and linalool as a minor product, using geranyl diphosphate (GPP) as substrate. Also shows sesquiterpene synthase activity as it is able to convert farnesyl diphosphate (FPP) into (E,E)-alpha-farnesene. Finally, TPS1 can convert geranylgeranyl diphosphate into (E,E,E)-alpha-springene. This chain is IDS-like terpene synthase 1, found in Melampsora larici-populina (strain 98AG31 / pathotype 3-4-7) (Poplar leaf rust fungus).